A 484-amino-acid chain; its full sequence is tRNA-2-methylthio-N(6)-dimethylallyladenosine synthase (484 aa).

In terms of domain architecture, MTTase N-terminal spans 36-153 (GKLYIKTHGC…LPELIRARRE (118 aa)). 6 residues coordinate [4Fe-4S] cluster: cysteine 45, cysteine 82, cysteine 116, cysteine 190, cysteine 194, and cysteine 197. The Radical SAM core domain maps to 176–415 (RAEGPSAFVS…HISAHAASIS (240 aa)). The region spanning 416 to 479 (QSMVGSVQRV…SNSLRGRIQL (64 aa)) is the TRAM domain. The disordered stretch occupies residues 428–450 (EGPSRRDPNELTGKSENMRPVNF).

It belongs to the methylthiotransferase family. MiaB subfamily. Monomer. Requires [4Fe-4S] cluster as cofactor.

The protein localises to the cytoplasm. It carries out the reaction N(6)-dimethylallyladenosine(37) in tRNA + (sulfur carrier)-SH + AH2 + 2 S-adenosyl-L-methionine = 2-methylsulfanyl-N(6)-dimethylallyladenosine(37) in tRNA + (sulfur carrier)-H + 5'-deoxyadenosine + L-methionine + A + S-adenosyl-L-homocysteine + 2 H(+). Catalyzes the methylthiolation of N6-(dimethylallyl)adenosine (i(6)A), leading to the formation of 2-methylthio-N6-(dimethylallyl)adenosine (ms(2)i(6)A) at position 37 in tRNAs that read codons beginning with uridine. This Xanthomonas oryzae pv. oryzae (strain MAFF 311018) protein is tRNA-2-methylthio-N(6)-dimethylallyladenosine synthase.